The following is a 1705-amino-acid chain: Alpha-protein kinase 3 (1705 aa).

The span at 1–10 (MGSRRAPSRG) shows a compositional bias: low complexity. The disordered stretch occupies residues 1 to 33 (MGSRRAPSRGWGAGGRSGAGGDGEDDGPVWIPS). Gly residues predominate over residues 11-21 (WGAGGRSGAGG). One can recognise an Ig-like 1 domain in the interval 77–168 (PLFETTLKSR…GIVSCSGVLE (92 aa)). The segment covering 211 to 221 (DTLRKLSPDRF) has biased composition (basic and acidic residues). 5 disordered regions span residues 211–244 (DTLR…EPEG), 308–749 (LKEE…GPRA), 792–845 (GPLS…ERPG), 1082–1145 (GLAS…KFPG), and 1173–1226 (RAAG…MLEV). Ser228 is modified (phosphoserine). The span at 308-342 (LKEESGAKKKKKDEESKQGLRKPELEKAAQSRRSS) shows a compositional bias: basic and acidic residues. Low complexity predominate over residues 370 to 382 (PRGRAARGPGSSG). The span at 495–504 (DSKPISSLSQ) shows a compositional bias: polar residues. Low complexity predominate over residues 557 to 579 (TTTAPTMSASSSSDVASIGVSTS). The span at 598-609 (TSANQRTGSKKN) shows a compositional bias: polar residues. Over residues 647-657 (ESKRPQSDRSA) the composition is skewed to basic and acidic residues. Residues 666–676 (RAETQLETTQA) are compositionally biased toward polar residues. The span at 679 to 700 (KIQEDRKAQADKGTQEDRRMQG) shows a compositional bias: basic and acidic residues. Residues 708 to 729 (KGTQSEGSAPTAMEGQSEQEVA) are compositionally biased toward polar residues. The segment covering 736 to 745 (SRTPKLPPTA) has biased composition (pro residues). Over residues 829-844 (AKQEDSPFQCPKEERP) the composition is skewed to basic and acidic residues. A compositionally biased stretch (low complexity) spans 1120-1131 (GQAAPGQGPSAE). A Phosphoserine modification is found at Ser1222. The Ig-like 2 domain maps to 1274–1362 (PQVIRKIRVE…GSASTDFCLS (89 aa)). Cys1296 and Cys1346 are joined by a disulfide. The 236-residue stretch at 1390–1625 (KGLADSGCWG…YCELLGLTPL (236 aa)) folds into the Alpha-type protein kinase domain. The interval 1628 to 1705 (PEAAHPQAKA…EEGSKAQGMR (78 aa)) is disordered. The segment covering 1664-1696 (PQGTRKSAPSSKATPQASEPVTTQLLGQPPTQE) has biased composition (polar residues).

It belongs to the protein kinase superfamily. Alpha-type protein kinase family. ALPK subfamily.

It localises to the nucleus. It catalyses the reaction L-seryl-[protein] + ATP = O-phospho-L-seryl-[protein] + ADP + H(+). The catalysed reaction is L-threonyl-[protein] + ATP = O-phospho-L-threonyl-[protein] + ADP + H(+). Functionally, involved in cardiomyocyte differentiation. The chain is Alpha-protein kinase 3 from Homo sapiens (Human).